A 144-amino-acid chain; its full sequence is Large ribosomal subunit protein uL15 (144 aa).

Residues 1 to 56 are disordered; it reads MELNNLKPAEGAKHAKRRVGRGIGSGLGKTAGRGHKGQKSRSGGFHKVGFEGGQMP. The span at 21–31 shows a compositional bias: gly residues; it reads RGIGSGLGKTA.

It belongs to the universal ribosomal protein uL15 family. In terms of assembly, part of the 50S ribosomal subunit.

Binds to the 23S rRNA. The sequence is that of Large ribosomal subunit protein uL15 from Burkholderia mallei (strain NCTC 10247).